Consider the following 152-residue polypeptide: Putative pseudoazurin (152 aa).

An N-terminal signal peptide occupies residues 1 to 23; that stretch reads MPLKFGLIVATAALIASAASLMA. Residues 28-116 form the Plastocyanin-like domain; sequence VQMLNKGTDG…MGMVALIQVG (89 aa). Residues histidine 63, cysteine 101, histidine 104, and methionine 109 each contribute to the Cu cation site.

It depends on Cu cation as a cofactor.

It is found in the periplasm. Its function is as follows. This soluble electron transfer copper protein is required for the inactivation of copper-containing nitrite reductase in the presence of oxygen. This Rhizobium leguminosarum bv. viciae protein is Putative pseudoazurin (azu).